Here is a 1226-residue protein sequence, read N- to C-terminus: Methionine synthase (1226 aa).

The region spanning 6–326 is the Hcy-binding domain; that stretch reads RAQIEAQLKQ…EHIRHMAMAV (321 aa). The Zn(2+) site is built by Cys-248, Cys-311, and Cys-312. Residues 357–618 enclose the Pterin-binding domain; it reads FVNVGERTNV…VPEKLREAVE (262 aa). A B12-binding N-terminal domain is found at 651 to 745; that stretch reads SALEWRTWSV…FINASKQAGS (95 aa). Methylcob(III)alamin contacts are provided by residues Glu-695, 757–761, His-760, Ser-805, Thr-809, and Ala-861; that span reads GDVHD. One can recognise a B12-binding domain in the interval 747–882; sequence NGKILLATVK…SDELRPAFVE (136 aa). The region spanning 898–1226 is the AdoMet activation domain; that stretch reads KKPRTKPVTL…EKWLGPNING (329 aa). Residues Asp-948, Arg-1136, and 1191–1192 contribute to the S-adenosyl-L-methionine site; that span reads YF.

The protein belongs to the vitamin-B12 dependent methionine synthase family. Requires methylcob(III)alamin as cofactor. Zn(2+) serves as cofactor.

The enzyme catalyses (6S)-5-methyl-5,6,7,8-tetrahydrofolate + L-homocysteine = (6S)-5,6,7,8-tetrahydrofolate + L-methionine. The protein operates within amino-acid biosynthesis; L-methionine biosynthesis via de novo pathway; L-methionine from L-homocysteine (MetH route): step 1/1. Functionally, catalyzes the transfer of a methyl group from methyl-cobalamin to homocysteine, yielding enzyme-bound cob(I)alamin and methionine. Subsequently, remethylates the cofactor using methyltetrahydrofolate. This is Methionine synthase (metH) from Vibrio vulnificus (strain CMCP6).